The chain runs to 100 residues: UPF0235 protein Cvib_0403 (100 aa).

It belongs to the UPF0235 family.

The protein is UPF0235 protein Cvib_0403 of Chlorobium phaeovibrioides (strain DSM 265 / 1930) (Prosthecochloris vibrioformis (strain DSM 265)).